The following is a 316-amino-acid chain: Ribosomal RNA small subunit methyltransferase H (316 aa).

S-adenosyl-L-methionine-binding positions include 35 to 37 (AGH), Asp-55, Phe-84, Asp-105, and Gln-112.

Belongs to the methyltransferase superfamily. RsmH family.

Its subcellular location is the cytoplasm. The enzyme catalyses cytidine(1402) in 16S rRNA + S-adenosyl-L-methionine = N(4)-methylcytidine(1402) in 16S rRNA + S-adenosyl-L-homocysteine + H(+). Its function is as follows. Specifically methylates the N4 position of cytidine in position 1402 (C1402) of 16S rRNA. The sequence is that of Ribosomal RNA small subunit methyltransferase H from Streptococcus gordonii (strain Challis / ATCC 35105 / BCRC 15272 / CH1 / DL1 / V288).